The primary structure comprises 210 residues: Outer-membrane lipoprotein LolB (210 aa).

The N-terminal stretch at 1 to 29 is a signal peptide; the sequence is MSLISNNEERSLRVRYCIAIALSALLISG. The N-palmitoyl cysteine moiety is linked to residue cysteine 30. Residue cysteine 30 is the site of S-diacylglycerol cysteine attachment.

The protein belongs to the LolB family. Monomer.

It is found in the cell outer membrane. In terms of biological role, plays a critical role in the incorporation of lipoproteins in the outer membrane after they are released by the LolA protein. The polypeptide is Outer-membrane lipoprotein LolB (Coxiella burnetii (strain RSA 493 / Nine Mile phase I)).